The primary structure comprises 180 residues: GTP cyclohydrolase 1 (180 aa).

Zn(2+)-binding residues include Cys-71, His-74, and Cys-142.

This sequence belongs to the GTP cyclohydrolase I family. As to quaternary structure, toroid-shaped homodecamer, composed of two pentamers of five dimers.

It catalyses the reaction GTP + H2O = 7,8-dihydroneopterin 3'-triphosphate + formate + H(+). It functions in the pathway cofactor biosynthesis; 7,8-dihydroneopterin triphosphate biosynthesis; 7,8-dihydroneopterin triphosphate from GTP: step 1/1. In Helicobacter pylori (strain ATCC 700392 / 26695) (Campylobacter pylori), this protein is GTP cyclohydrolase 1 (folE).